We begin with the raw amino-acid sequence, 312 residues long: Ribosomal RNA small subunit methyltransferase H (312 aa).

S-adenosyl-L-methionine contacts are provided by residues 33–35, D53, F79, D100, and Q107; that span reads AGH.

It belongs to the methyltransferase superfamily. RsmH family.

It is found in the cytoplasm. The enzyme catalyses cytidine(1402) in 16S rRNA + S-adenosyl-L-methionine = N(4)-methylcytidine(1402) in 16S rRNA + S-adenosyl-L-homocysteine + H(+). Specifically methylates the N4 position of cytidine in position 1402 (C1402) of 16S rRNA. The protein is Ribosomal RNA small subunit methyltransferase H of Clostridium acetobutylicum (strain ATCC 824 / DSM 792 / JCM 1419 / IAM 19013 / LMG 5710 / NBRC 13948 / NRRL B-527 / VKM B-1787 / 2291 / W).